Here is a 398-residue protein sequence, read N- to C-terminus: MVPAIPETPVRKFNINFGPQHPAAHGVLRLVLELDGEIVERVDPHIGLLHRGTEKLMEARTYLQNIPYFDRLDYVAPMNQEHAFCLAIEKLLGVEVPIRGQIIRVLYSEIGRILNHLLNVTTQAMDVGALTPPLWGFEEREKLMVFYERACGARLHSNYFRPGGVHQDLPPELVEDIDTWAKAFPKICDDIEGLITDNRIFKQRNVDIGVVSKEEAISWGFSGVMVRGSGIAWDLRRSQPYENYNDFEFDIPLGKNGDCYDRYLCRMQEMRESTKIIRQACEMLRKTHGPVLSEDNKVAPPRRAEMKRSMEALIHHFKLYTEGFKTPAGEVYACVEAPKGEFGVFVVSDGTNKPYRCKIRAPGFPHLAAMDWMNRGHQLADVSAILGSLDIVFGEIDR.

This sequence belongs to the complex I 49 kDa subunit family. NDH-1 is composed of 14 different subunits. Subunits NuoB, C, D, E, F, and G constitute the peripheral sector of the complex.

It is found in the cell inner membrane. It carries out the reaction a quinone + NADH + 5 H(+)(in) = a quinol + NAD(+) + 4 H(+)(out). Its function is as follows. NDH-1 shuttles electrons from NADH, via FMN and iron-sulfur (Fe-S) centers, to quinones in the respiratory chain. The immediate electron acceptor for the enzyme in this species is believed to be ubiquinone. Couples the redox reaction to proton translocation (for every two electrons transferred, four hydrogen ions are translocated across the cytoplasmic membrane), and thus conserves the redox energy in a proton gradient. This Caulobacter vibrioides (strain ATCC 19089 / CIP 103742 / CB 15) (Caulobacter crescentus) protein is NADH-quinone oxidoreductase subunit D.